The sequence spans 49 residues: Large ribosomal subunit protein bL33D (49 aa).

Belongs to the bacterial ribosomal protein bL33 family.

In Enterococcus faecalis (strain ATCC 700802 / V583), this protein is Large ribosomal subunit protein bL33D (rpmG4).